Here is a 222-residue protein sequence, read N- to C-terminus: Cyclin-dependent kinase inhibitor 3 (222 aa).

The segment at 68-101 (KPSSLIEPKQPPRVHRSGIKESGSRSRVDSVNSV) is disordered. Residues 85 to 95 (GIKESGSRSRV) are compositionally biased toward basic and acidic residues.

This sequence belongs to the CDI family. ICK/KRP subfamily. In terms of assembly, specifically interacts with CDKA-1, but not with CDKB1-1.

The protein localises to the nucleus. The protein resides in the nucleoplasm. Its function is as follows. Binds and inhibits CYCD2-1/CDKA-1 complex kinase activity. May target specifically CDKA-1. This Arabidopsis thaliana (Mouse-ear cress) protein is Cyclin-dependent kinase inhibitor 3 (KRP3).